Reading from the N-terminus, the 1185-residue chain is Syntaxin-binding protein 5-like (1185 aa).

The residue at position 1 (Met-1) is an N-acetylmethionine. Positions 15 to 44 are disordered; sequence ASSPGSGSSSGSNSGGAGSGSVHPGGTAGL. The span at 16–26 shows a compositional bias: low complexity; sequence SSPGSGSSSGS. WD repeat units follow at residues 73–106, 113–152, 157–193, 212–246, 252–284, 306–348, 356–390, 412–489, 517–628, and 642–704; these read TALA…CYCQ, VLQL…SLKF, ITYC…GYVI, HLSD…ELRV, IHSI…PSRP, PILK…KAIT, IVEF…VVDL, TCTA…YKLK, QMIY…DLVI, and TSLS…IADN. Residue Thr-567 is modified to Phosphothreonine. A disordered region spans residues 567–601; it reads TPEPETSPPFPDLSSQLPPSRSLSGSTNTVSSEGV. Phosphoserine occurs at positions 573, 588, and 592. Low complexity predominate over residues 578–592; the sequence is DLSSQLPPSRSLSGS. Residue Thr-595 is modified to Phosphothreonine. Phosphoserine is present on Ser-598. At Arg-708 the chain carries Omega-N-methylarginine. Positions 747–768 are enriched in polar residues; it reads TSDHVNGHCTSPTSQSCSSGKR. A disordered region spans residues 747-770; it reads TSDHVNGHCTSPTSQSCSSGKRLS. Ser-762, Ser-764, Ser-765, Ser-770, Ser-771, Ser-792, Ser-799, Ser-811, Ser-819, Ser-821, and Ser-822 each carry phosphoserine. WD repeat units lie at residues 831-888, 897-968, 973-1017, and 1031-1054; these read ITAL…SGTF, TFSC…QTCL, ITET…LDVN, and CFTN…TYSQ. Thr-1092 is subject to Phosphothreonine. The v-SNARE coiled-coil homology domain occupies 1120–1180; that stretch reads SIEGMKGAAG…HELMLKYKDK (61 aa).

This sequence belongs to the WD repeat L(2)GL family. As to quaternary structure, interacts with STX1A and STX4. Phosphorylated, leading to STXBP5L increased turnover and subsequent de-repression of insulin secretion. Phosphorylated on serine residues in response to glucose or phorbol esters. In terms of processing, ubiquitinated by the E3 ligase SYVN1, leading to STXBP5L proteasomal degradation. Detected in hippocampus and cerebellum. Expressed in pancreatic beta-cells where it modulates insulin secretion.

The protein resides in the cytoplasm. The protein localises to the cell membrane. It localises to the membrane. In terms of biological role, plays a role in vesicle trafficking and exocytosis inhibition. In pancreatic beta-cells, inhibits insulin secretion probably by interacting with and regulating STX1A and STX4, key t-SNARE proteins involved in the fusion of insulin granules to the plasma membrane. Also plays a role in neurotransmitter release by inhibiting basal acetylcholine release from axon terminals and by preventing synaptic fatigue upon repetitive stimulation. Promotes as well axonal outgrowth. The polypeptide is Syntaxin-binding protein 5-like (Stxbp5l) (Mus musculus (Mouse)).